Consider the following 467-residue polypeptide: Cilia- and flagella-associated protein 97 (467 aa).

4 disordered regions span residues 1-20 (MDRY…FFDS), 76-235 (IAKP…DISP), 336-370 (RQAA…KEQQ), and 412-467 (ALSP…AAWQ). Acidic residues predominate over residues 124-135 (DNYYPDEEDSSE). Polar residues predominate over residues 162–177 (DFVSTISSSDTEYSDT). Over residues 180–194 (DDGASKSSYQSSKGS) the composition is skewed to low complexity. A compositionally biased stretch (basic and acidic residues) spans 198 to 216 (SPERKPSRSSMRELRHYAE). Over residues 223–235 (TDVTPLSTPDISP) the composition is skewed to polar residues. Residues 310–387 (KKNFSFSNDE…ALLKRLESVK (78 aa)) adopt a coiled-coil conformation. Low complexity predominate over residues 421–439 (SVSRLSPSVSSGGFSRMSS).

The protein belongs to the CFAP97 family.

The chain is Cilia- and flagella-associated protein 97 from Xenopus tropicalis (Western clawed frog).